Consider the following 381-residue polypeptide: tRNA-specific 2-thiouridylase MnmA (381 aa).

ATP-binding positions include 9–16 and Met35; that span reads GMSGGVDS. An interaction with target base in tRNA region spans residues 95–97; sequence NPD. Cys100 acts as the Nucleophile in catalysis. Cys100 and Cys196 form a disulfide bridge. Residue Gly124 coordinates ATP. The tract at residues 146–148 is interaction with tRNA; the sequence is KDQ. Catalysis depends on Cys196, which acts as the Cysteine persulfide intermediate. The interval 308–309 is interaction with tRNA; that stretch reads RY.

Belongs to the MnmA/TRMU family.

It is found in the cytoplasm. It catalyses the reaction S-sulfanyl-L-cysteinyl-[protein] + uridine(34) in tRNA + AH2 + ATP = 2-thiouridine(34) in tRNA + L-cysteinyl-[protein] + A + AMP + diphosphate + H(+). Catalyzes the 2-thiolation of uridine at the wobble position (U34) of tRNA, leading to the formation of s(2)U34. The sequence is that of tRNA-specific 2-thiouridylase MnmA from Burkholderia multivorans (strain ATCC 17616 / 249).